The sequence spans 265 residues: Palmitoyltransferase ZDHHC21 (265 aa).

At 1 to 16 (MGLRIHFVVDPHGWCC) the chain is on the cytoplasmic side. A helical membrane pass occupies residues 17-37 (MGLIVFVWLYNFFLIPKIVLF). At 38-44 (PHYEEGH) the chain is on the extracellular side. Residues 45–65 (IPGILIIIFYGIAMFCLVALV) form a helical membrane-spanning segment. At 66–133 (RASITDPGRL…NNCVGEDNHW (68 aa)) the chain is on the cytoplasmic side. In terms of domain architecture, DHHC spans 90–140 (ELCNKCNLMRPKRSHHCSRCGHCVRRMDHHCPWINNCVGEDNHWLFLQLCF). The active-site S-palmitoyl cysteine intermediate is cysteine 120. The chain crosses the membrane as a helical span at residues 134-154 (LFLQLCFYTELLTCYALMFSF). Topologically, residues 155–185 (CHYYYFLPLKKRNLDLFVVRHELAIMRLAAF) are extracellular. The helical transmembrane segment at 186–206 (MGITMLVGITGLFYTQLIGII) threads the bilayer. The Cytoplasmic portion of the chain corresponds to 207-265 (TDTTSIEKMSNCCEEISRPRKPWQQTFSEVFGTRWKILWFIPFRRRQPLRVPYHFANHV).

This sequence belongs to the DHHC palmitoyltransferase family.

Its subcellular location is the golgi apparatus membrane. It localises to the golgi apparatus. The protein resides in the cis-Golgi network membrane. The protein localises to the cell membrane. It carries out the reaction L-cysteinyl-[protein] + hexadecanoyl-CoA = S-hexadecanoyl-L-cysteinyl-[protein] + CoA. Palmitoyltransferase that catalyzes the addition of palmitate onto various protein substrates. Palmitoylates sex steroid hormone receptors, including ESR1, PGR and AR, thereby regulating their targeting to the plasma membrane. This affects rapid intracellular signaling by sex hormones via ERK and AKT kinases and the generation of cAMP, but does not affect that mediated by their nuclear receptor. Palmitoylates FYN, regulates its localization in hair follicles and plays a key role in epidermal homeostasis and hair follicle differentiation. Through the palmitoylation of PLCB1 and the regulation of PLCB1 downstream signaling may indirectly regulate the function of the endothelial barrier and the adhesion of leukocytes to the endothelium. Also has a palmitoyltransferase activity toward ADRA1D, positively regulating its activity and expression and may thereby play a role in vascular contraction. May also palmitoylate eNOS and LCK. This Bos taurus (Bovine) protein is Palmitoyltransferase ZDHHC21.